Here is a 280-residue protein sequence, read N- to C-terminus: Nucleotide-binding protein Swoo_4243 (280 aa).

8–15 contributes to the ATP binding site; it reads GRSGSGKS. Residue 56–59 participates in GTP binding; it reads DVRN.

The protein belongs to the RapZ-like family.

Functionally, displays ATPase and GTPase activities. This Shewanella woodyi (strain ATCC 51908 / MS32) protein is Nucleotide-binding protein Swoo_4243.